The chain runs to 240 residues: Membrane-spanning 4-domains subfamily A member 15 (240 aa).

4 helical membrane passes run 73 to 93, 100 to 120, 144 to 164, and 173 to 193; these read VLGT…SVLL, VGIF…FIIS, ILSV…FGVT, and LAVL…AMHF.

Belongs to the MS4A family.

The protein resides in the membrane. May be involved in signal transduction as a component of a multimeric receptor complex. The protein is Membrane-spanning 4-domains subfamily A member 15 (MS4A15) of Homo sapiens (Human).